A 795-amino-acid polypeptide reads, in one-letter code: Phenylalanine--tRNA ligase beta subunit (795 aa).

The tRNA-binding domain maps to 39–148 (KSEFHGVVVG…KETLVGINVY (110 aa)). The region spanning 400 to 475 (HKNNTIRLHH…RIYEYNNVHL (76 aa)) is the B5 domain. Positions 453, 459, and 463 each coordinate Mg(2+). The 94-residue stretch at 701 to 794 (SKFPTVRRDI…LQKKFQAVLR (94 aa)) folds into the FDX-ACB domain.

Belongs to the phenylalanyl-tRNA synthetase beta subunit family. Type 1 subfamily. In terms of assembly, tetramer of two alpha and two beta subunits. Mg(2+) serves as cofactor.

Its subcellular location is the cytoplasm. The enzyme catalyses tRNA(Phe) + L-phenylalanine + ATP = L-phenylalanyl-tRNA(Phe) + AMP + diphosphate + H(+). This Buchnera aphidicola subsp. Acyrthosiphon pisum (strain APS) (Acyrthosiphon pisum symbiotic bacterium) protein is Phenylalanine--tRNA ligase beta subunit (pheT).